Here is a 187-residue protein sequence, read N- to C-terminus: Large ribosomal subunit protein uL22 (187 aa).

Residues 155–187 (DAVSRAAPTDDAPAKKKLSKKKLARQKEKMMRE) are disordered. Basic residues predominate over residues 169–178 (KKKLSKKKLA).

It belongs to the universal ribosomal protein uL22 family.

In Lonomia obliqua (Moth), this protein is Large ribosomal subunit protein uL22 (RpL17).